We begin with the raw amino-acid sequence, 187 residues long: Ribosome-recycling factor (187 aa).

The protein belongs to the RRF family.

It is found in the cytoplasm. Responsible for the release of ribosomes from messenger RNA at the termination of protein biosynthesis. May increase the efficiency of translation by recycling ribosomes from one round of translation to another. This chain is Ribosome-recycling factor, found in Ruegeria sp. (strain TM1040) (Silicibacter sp.).